The primary structure comprises 123 residues: Large ribosomal subunit protein uL18 (123 aa).

The protein belongs to the universal ribosomal protein uL18 family. In terms of assembly, part of the 50S ribosomal subunit; part of the 5S rRNA/L5/L18/L25 subcomplex. Contacts the 5S and 23S rRNAs.

In terms of biological role, this is one of the proteins that bind and probably mediate the attachment of the 5S RNA into the large ribosomal subunit, where it forms part of the central protuberance. In Chlamydia trachomatis serovar A (strain ATCC VR-571B / DSM 19440 / HAR-13), this protein is Large ribosomal subunit protein uL18.